The primary structure comprises 215 residues: Guanylate kinase (215 aa).

A Guanylate kinase-like domain is found at glycine 9–histidine 187. Residue alanine 16 to threonine 23 participates in ATP binding.

Belongs to the guanylate kinase family.

Its subcellular location is the cytoplasm. The enzyme catalyses GMP + ATP = GDP + ADP. Its function is as follows. Essential for recycling GMP and indirectly, cGMP. The polypeptide is Guanylate kinase (Chromohalobacter salexigens (strain ATCC BAA-138 / DSM 3043 / CIP 106854 / NCIMB 13768 / 1H11)).